A 1091-amino-acid polypeptide reads, in one-letter code: Ninein homolog (1091 aa).

The segment at 1–361 (MEVSADPYEQ…AVEVDERHAS (361 aa)) is sufficient for binding to microtubules. Disordered regions lie at residues 100–216 (YIES…TTSP), 456–483 (AQTSSSIGGTPEHSPLRPRRHSEDKEEE), 525–602 (KAKK…EELT), and 616–639 (KAAKEGRSLTPESRSKELETSLEQ). Phosphoserine occurs at positions 103, 107, 108, 113, and 141. Phosphothreonine is present on Thr-144. Polar residues predominate over residues 168–177 (VQRSSSQSDL). The segment at 487–526 (LMEKLAALQMENAQLRDKTDELTIEIESLNVELIRSKTKA) is sufficient for interaction with ens. Basic and acidic residues-rich tracts occupy residues 527-537 (KKQEKQEKQED) and 547-563 (RRGDSPSKTHLTEESPR). Ser-594 carries the phosphoserine modification. Residues 616 to 634 (KAAKEGRSLTPESRSKELE) are compositionally biased toward basic and acidic residues. 2 positions are modified to phosphoserine: Ser-701 and Ser-714. The interval 799–919 (AKSLADSKDE…TSCLSHEKCS (121 aa)) is disordered. A compositionally biased stretch (polar residues) spans 822 to 845 (SHKTASRNNLTTSETSIFSTTPFE). A compositionally biased stretch (low complexity) spans 846 to 860 (SSQSGPSPTNSGNSN). The segment covering 894–913 (ETSSTASGKSFESNSKTSCL) has biased composition (polar residues).

As to quaternary structure, interacts with ens.

It localises to the cytoplasm. Its subcellular location is the cytoskeleton. It is found in the microtubule organizing center. The protein localises to the centrosome. The protein resides in the perinuclear region. Its function is as follows. Required for the positioning and anchorage of the microtubule minus-ends in various cells. In fat body cells, part of perinuclear non-centrosomal microtubule-organizing centers (ncMTOCs) which function to accommodate the organization of microtubule (MT) networks to control nuclear positioning and dynein motor-based retrograde endosomal trafficking. Within the ncMTOCs, Msp300 and shot anchors the ncMTOC at the nuclear surface and recruits the MT minus-end regulators Patronin and Nin for assembly, anchoring and/or stabilization of circumferential and radial MTs at the ncMTOC. This protein may also function with Patronin to recruit msps to the ncMTOC for the gamma-tubulin-independent elongation of radial MTs. In embryonic myotubes and larval myofibers, functions with ens to regulate myonuclear positioning and, as a consequence, is involved in muscle development. Likely functions by positively regulating ens. Essential for embryogenesis, likely by contributing to accurate chromosome segregation during early embryonic nuclear divisions. However, other reports found that it is not essential for embryogenesis or embryonic cellular divisions. The sequence is that of Ninein homolog from Drosophila melanogaster (Fruit fly).